The sequence spans 294 residues: UDP-3-O-acyl-N-acetylglucosamine deacetylase (294 aa).

Residues histidine 75, histidine 232, and aspartate 236 each coordinate Zn(2+). Residue histidine 259 is the Proton donor of the active site.

The protein belongs to the LpxC family. It depends on Zn(2+) as a cofactor.

The catalysed reaction is a UDP-3-O-[(3R)-3-hydroxyacyl]-N-acetyl-alpha-D-glucosamine + H2O = a UDP-3-O-[(3R)-3-hydroxyacyl]-alpha-D-glucosamine + acetate. The protein operates within glycolipid biosynthesis; lipid IV(A) biosynthesis; lipid IV(A) from (3R)-3-hydroxytetradecanoyl-[acyl-carrier-protein] and UDP-N-acetyl-alpha-D-glucosamine: step 2/6. Catalyzes the hydrolysis of UDP-3-O-myristoyl-N-acetylglucosamine to form UDP-3-O-myristoylglucosamine and acetate, the committed step in lipid A biosynthesis. This Campylobacter jejuni subsp. jejuni serotype O:6 (strain 81116 / NCTC 11828) protein is UDP-3-O-acyl-N-acetylglucosamine deacetylase.